A 249-amino-acid polypeptide reads, in one-letter code: 2,3-bisphosphoglycerate-dependent phosphoglycerate mutase (249 aa).

Substrate is bound by residues 8 to 15 (RHGQSAWN), 21 to 22 (TG), R60, 87 to 90 (ERHY), K98, 114 to 115 (RR), and 183 to 184 (GN). H9 functions as the Tele-phosphohistidine intermediate in the catalytic mechanism. Residue E87 is the Proton donor/acceptor of the active site. The disordered stretch occupies residues 115–137 (RSYDTPPPPLPADDPRSPAGDAR).

The protein belongs to the phosphoglycerate mutase family. BPG-dependent PGAM subfamily. As to quaternary structure, homodimer.

The enzyme catalyses (2R)-2-phosphoglycerate = (2R)-3-phosphoglycerate. It functions in the pathway carbohydrate degradation; glycolysis; pyruvate from D-glyceraldehyde 3-phosphate: step 3/5. Catalyzes the interconversion of 2-phosphoglycerate and 3-phosphoglycerate. The protein is 2,3-bisphosphoglycerate-dependent phosphoglycerate mutase of Nitratidesulfovibrio vulgaris (strain DSM 19637 / Miyazaki F) (Desulfovibrio vulgaris).